The sequence spans 349 residues: N-formyl peptide receptor 3 (349 aa).

At 1 to 27 (METNFSIPLNETEEVLPEPAGHTVLWI) the chain is on the extracellular side. 2 N-linked (GlcNAc...) asparagine glycosylation sites follow: asparagine 4 and asparagine 10. Residues 28–50 (FSLLVHGVTFIFGVLGNGLVIWV) form a helical membrane-spanning segment. Topologically, residues 51-61 (AGFLMTRTVNT) are cytoplasmic. A helical transmembrane segment spans residues 62–83 (ICYLNLALADFSFSAILPFHMV). Over 84–100 (SVAMREKWPFGSFLCKL) the chain is Extracellular. Cysteine 98 and cysteine 176 are joined by a disulfide. A helical membrane pass occupies residues 101-121 (VHVMIDINLFVSVYLITIIAL). Residues 122–140 (DRCICVLHPAWAQNHRTMS) lie on the Cytoplasmic side of the membrane. The chain crosses the membrane as a helical span at residues 141 to 162 (LAKRVMTGLWILTIVLTLPNFI). Topologically, residues 163–205 (FWTTISTTNGDTYCIFNFPFWGDTAVERLNVFITMAKVFLILH) are extracellular. The helical transmembrane segment at 206 to 226 (FIIGFSMPMSIITVCYGIIAA) threads the bilayer. Over 227 to 242 (KIHRNHMIKSSRPLRV) the chain is Cytoplasmic. A helical membrane pass occupies residues 243–266 (FAAVVASFFICWFPYELIGILMAV). Residues 267 to 286 (WLKEMLLNGKYKIILVLINP) lie on the Extracellular side of the membrane. Residues 287–306 (TSSLAFFNSCLNPILYVFLG) traverse the membrane as a helical segment. Residues 307–349 (SNFQERLIRSLPTSLERALTEVPDSAQTSNTHTTSASPPEETE) lie on the Cytoplasmic side of the membrane. The interval 327–349 (EVPDSAQTSNTHTTSASPPEETE) is disordered. Positions 331 to 343 (SAQTSNTHTTSAS) are enriched in polar residues.

The protein belongs to the G-protein coupled receptor 1 family.

The protein resides in the cell membrane. In terms of biological role, low affinity receptor for N-formyl-methionyl peptides, which are powerful neutrophils chemotactic factors. Binding of FMLP to the receptor causes activation of neutrophils. This response is mediated via a G-protein that activates a phosphatidylinositol-calcium second messenger system. This Gorilla gorilla gorilla (Western lowland gorilla) protein is N-formyl peptide receptor 3 (FPR3).